The chain runs to 828 residues: Periplasmic nitrate reductase (828 aa).

Residues 1–31 (MKLSRRHFMKANAVAAAAAVAGITIPIAVRA) constitute a signal peptide (tat-type signal). Residues 39–95 (IHWDKAPCRFCGVGCGVLVGTQNGRIVASQGDPDAPVNRGLNCIKGYFLPKIMYGQD) form the 4Fe-4S Mo/W bis-MGD-type domain. The [4Fe-4S] cluster site is built by C46, C49, C53, and C81. Mo-bis(molybdopterin guanine dinucleotide) contacts are provided by residues K83, Q150, N175, C179, 212–219 (WGSNMAEM), 243–247 (STYQH), 262–264 (QTD), M372, Q376, N482, 508–509 (SD), K531, D558, and 718–727 (TGRVLEHWHT). Position 794 (F794) interacts with substrate. Mo-bis(molybdopterin guanine dinucleotide)-binding residues include N802 and K819.

This sequence belongs to the prokaryotic molybdopterin-containing oxidoreductase family. NasA/NapA/NarB subfamily. In terms of assembly, component of the periplasmic nitrate reductase NapAB complex composed of NapA and NapB. [4Fe-4S] cluster is required as a cofactor. Requires Mo-bis(molybdopterin guanine dinucleotide) as cofactor. Post-translationally, predicted to be exported by the Tat system. The position of the signal peptide cleavage has not been experimentally proven.

The protein localises to the periplasm. The enzyme catalyses 2 Fe(II)-[cytochrome] + nitrate + 2 H(+) = 2 Fe(III)-[cytochrome] + nitrite + H2O. Its function is as follows. Catalytic subunit of the periplasmic nitrate reductase complex NapAB. Receives electrons from NapB and catalyzes the reduction of nitrate to nitrite. The chain is Periplasmic nitrate reductase from Pectobacterium carotovorum subsp. carotovorum (strain PC1).